Consider the following 427-residue polypeptide: 3-phosphoshikimate 1-carboxyvinyltransferase (427 aa).

Positions 22, 23, and 27 each coordinate 3-phosphoshikimate. Position 22 (Lys-22) interacts with phosphoenolpyruvate. Residues Gly-94 and Arg-122 each contribute to the phosphoenolpyruvate site. Residues Ser-165, Gln-167, Asp-313, and Lys-340 each contribute to the 3-phosphoshikimate site. Gln-167 lines the phosphoenolpyruvate pocket. Residue Asp-313 is the Proton acceptor of the active site. 2 residues coordinate phosphoenolpyruvate: Arg-344 and Arg-386.

Belongs to the EPSP synthase family. Monomer.

Its subcellular location is the cytoplasm. It catalyses the reaction 3-phosphoshikimate + phosphoenolpyruvate = 5-O-(1-carboxyvinyl)-3-phosphoshikimate + phosphate. It functions in the pathway metabolic intermediate biosynthesis; chorismate biosynthesis; chorismate from D-erythrose 4-phosphate and phosphoenolpyruvate: step 6/7. Its function is as follows. Catalyzes the transfer of the enolpyruvyl moiety of phosphoenolpyruvate (PEP) to the 5-hydroxyl of shikimate-3-phosphate (S3P) to produce enolpyruvyl shikimate-3-phosphate and inorganic phosphate. The polypeptide is 3-phosphoshikimate 1-carboxyvinyltransferase (Koribacter versatilis (strain Ellin345)).